A 417-amino-acid polypeptide reads, in one-letter code: Mast cell carboxypeptidase A (417 aa).

Residues 1–15 (MRFFLLMAVIYTTLA) form the signal peptide. Residues 16-109 (IAPVHFDREK…IEKQFDVKDE (94 aa)) constitute a propeptide, activation peptide. The Peptidase M14 domain maps to 118 to 412 (KYNDWDKIVS…LSVKFIAKYI (295 aa)). 2 disulfides stabilise this stretch: cysteine 173–cysteine 186 and cysteine 245–cysteine 268. Histidine 176 and glutamate 179 together coordinate Zn(2+). A Zn(2+)-binding site is contributed by histidine 304. Glutamate 378 serves as the catalytic Proton donor/acceptor.

This sequence belongs to the peptidase M14 family. The cofactor is Zn(2+).

It localises to the cytoplasmic vesicle. Its subcellular location is the secretory vesicle. The enzyme catalyses Release of a C-terminal amino acid, but little or no action with -Asp, -Glu, -Arg, -Lys or -Pro.. The chain is Mast cell carboxypeptidase A (Cpa3) from Mus musculus (Mouse).